The primary structure comprises 457 residues: Acetylcholine receptor subunit alpha (457 aa).

A signal peptide spans Met-1–Gly-20. Over Ser-21–Leu-230 the chain is Extracellular. 2 disulfides stabilise this stretch: Cys-148-Cys-162 and Cys-212-Cys-213. N-linked (GlcNAc...) asparagine glycosylation occurs at Asn-161. Helical transmembrane passes span Pro-231–Leu-255, Met-263–Val-281, and Tyr-297–Ile-316. The Cytoplasmic segment spans residues Asn-317–His-428. The helical transmembrane segment at Ile-429 to Ala-447 threads the bilayer.

It belongs to the ligand-gated ion channel (TC 1.A.9) family. Acetylcholine receptor (TC 1.A.9.1) subfamily. Alpha-1/CHRNA1 sub-subfamily. As to quaternary structure, one of the alpha chains that assemble within the acetylcholine receptor, a pentamer of two alpha chains, a beta, a delta, and a gamma (in immature muscle) or epsilon (in mature muscle) chains. The muscle heteropentamer composed of alpha-1, beta-1, delta, epsilon subunits interacts with the alpha-conotoxin ImII.

Its subcellular location is the postsynaptic cell membrane. It localises to the cell membrane. It catalyses the reaction K(+)(in) = K(+)(out). The enzyme catalyses Na(+)(in) = Na(+)(out). Its function is as follows. Upon acetylcholine binding, the AChR responds by an extensive change in conformation that affects all subunits and leads to opening of an ion-conducting channel across the plasma membrane. The polypeptide is Acetylcholine receptor subunit alpha (CHRNA1) (Bos taurus (Bovine)).